An 805-amino-acid polypeptide reads, in one-letter code: G-type lectin S-receptor-like serine/threonine-protein kinase SD1-29 (805 aa).

The signal sequence occupies residues 1-21 (MGMVLFACLLLLIIFPTCGYA). Positions 22–141 (AINTSSPLSI…VSGNKLWQSF (120 aa)) constitute a Bulb-type lectin domain. Over 22 to 428 (AINTSSPLSI…SELAGSSRRK (407 aa)) the chain is Extracellular. 5 N-linked (GlcNAc...) asparagine glycosylation sites follow: N24, N50, N85, N91, and N248. The EGF-like domain maps to 277-313 (PENPCDLYGRCGPYGLCVRSDPPKCECLKGFVPKSDE). 2 disulfide bridges follow: C281–C293 and C287–C301. N319 and N378 each carry an N-linked (GlcNAc...) asparagine glycan. Residues 332 to 418 (CQAKSSMKTQ…GEFLFIRLAS (87 aa)) enclose the PAN domain. 2 disulfide bridges follow: C371-C392 and C375-C381. A helical transmembrane segment spans residues 429-449 (IIVGTTVSLSIFLILVFAAIM). Topologically, residues 450–805 (LWRYRAKQND…EMTESMIQGR (356 aa)) are cytoplasmic. The Protein kinase domain occupies 488–773 (FSPSNKLGQG…DLPVPKQPIF (286 aa)). Residues 494–502 (LGQGGFGPV) and K516 contribute to the ATP site. S522 and S537 each carry phosphoserine. The interval 577–594 (CLKFELDWPKRFNIIQGI) is caM-binding. Phosphotyrosine is present on Y600. D613 functions as the Proton acceptor in the catalytic mechanism. Phosphoserine is present on residues S617 and S630. Position 647 is a phosphothreonine (T647). Residues S690 and S793 each carry the phosphoserine modification.

The protein belongs to the protein kinase superfamily. Ser/Thr protein kinase family. As to quaternary structure, interacts with PUB9, PUB13, PUB14, PUB29, PUB38, PUB44 and PUB45. Interacts with PBL34, PBL35 and PBL36. Autophosphorylated at Tyr-600. Autophosphorylation at Tyr-600 is required for downstream phosphorylation of the receptor-like cytoplasmic kinase PBL34, PBL35 and PBL36, and activation of plant immunity.

The protein resides in the cell membrane. It catalyses the reaction L-seryl-[protein] + ATP = O-phospho-L-seryl-[protein] + ADP + H(+). The enzyme catalyses L-threonyl-[protein] + ATP = O-phospho-L-threonyl-[protein] + ADP + H(+). It carries out the reaction L-tyrosyl-[protein] + ATP = O-phospho-L-tyrosyl-[protein] + ADP + H(+). Its function is as follows. S-domain receptor protein kinase involved in lipopolysaccharide (LPS) sensing. Specifically detects LPS of Pseudomonas and Xanthomonas species. LPS are major components of the outer membrane of Gram-negative bacteria and are important microbe-associated molecular patterns (MAMPs) that trigger biphasic production of reactive oxygen species (ROS) and immune responses in plants. Seems to be only partially associated with the second LPS-triggered ROS burst. Mediates defense signaling in response to the medium-chain 3-hydroxy fatty acid 3-OH-C10:0, a pathogen-associated molecular pattern (PAMP) which induces autophosphorylation at Tyr-600. Autophosphorylation at Tyr-600 is required for downstream phosphorylation of the receptor-like cytoplasmic kinase PBL34, PBL35 and PBL36, and activation of plant immunity. (Microbial infection) Targeted by the bacterial type III effector protein tyrosine phosphatase HopAO1 from Pseudomonas syringae. HopAO1 dephosphorylates Tyr-600, which suppresses the immune response. This Arabidopsis thaliana (Mouse-ear cress) protein is G-type lectin S-receptor-like serine/threonine-protein kinase SD1-29.